A 522-amino-acid chain; its full sequence is MEELQGYFEKDRSRQQPFLYPLLFQEYIYALAHDRGLNRNGSIFYEPLEVFGYDSKSSLALVKRLIIRIYQQHFFLSSVNDSNQNRFVGHHHTNFFYSRFYSQMISEGFAIIVEIPFSLQLVSYLKEKEIPKYHNLRSIHSIFPFFEDKLLHFNYVSDILIPHPIHMEILVQILQCWIQDVPLLHFLRFFLHEYTNWNSFFITQNKSIYRFSKETKRLFRFLYNYYVYECEFVFVFIRKHSSYLRFTSFRTFLERRYFYGKMEHLQTEHLIIVCCYYFNGTLWSFKDPFMHYARCQGKAILASKGTHLLMKKWKYNFVNLWQYYFHFWYQSYRIHINQLSNHSFHFLGYLSSLLKNYSTVRNKMLDNSFLIDTLTTQFDTAVPVIFLIGALSKAQFCTVSGHPISKPIWTDLSDSGIIERFGRICRNLSHYHSGSSKKQGLYRIKYILRLSCARTLARKHKSTVRTFLQRLGSGLLEEFFTEREQDLSLILPKAITFPFQGSRRERIWYLDIIRINDLLNRS.

This sequence belongs to the intron maturase 2 family. MatK subfamily.

The protein localises to the plastid. Its subcellular location is the chloroplast. In terms of biological role, usually encoded in the trnK tRNA gene intron. Probably assists in splicing its own and other chloroplast group II introns. In Gladiolus papilio (Goldblotch gladiolus), this protein is Maturase K.